The chain runs to 1115 residues: Lateral signaling target protein 2 homolog (1115 aa).

Disordered stretches follow at residues 308–488, 545–586, 600–742, and 879–1027; these read PLGS…DSDS, SEDD…PSTS, RLPS…SLSD, and VQSS…PDGK. Positions 322–361 are enriched in low complexity; it reads NNSSSTTNTSNNNNNNTNNNNSSSGSDCTNNDKTGTTTNT. Residues 363–373 show a composition bias toward basic and acidic residues; that stretch reads KPVERLVDHRN. Low complexity-rich tracts occupy residues 374–417 and 425–444; these read NNTT…TPTA and PSHSIASTSSAATTSTNSPA. Residues 449-488 show a composition bias toward acidic residues; sequence YDDDDEDDDDDDVHADVEEDEDESGILDSDEHDLNDDSDS. 2 stretches are compositionally biased toward low complexity: residues 558 to 577 and 600 to 614; these read QQQQPQQQLEHHQQQLQQQQ and RLPSSSSDNEPSSNN. 2 positions are modified to phosphoserine: Ser603 and Ser604. Over residues 615–628 the composition is skewed to polar residues; sequence QQMTIKSPSEQTTT. Residues 632-655 are compositionally biased toward basic residues; the sequence is SNRHRHHSHHHHHHHHSHHHHHHQ. Positions 658-676 are enriched in low complexity; that stretch reads AAVAVAAAQDEQHNNNQPH. The span at 677 to 706 shows a compositional bias: basic residues; that stretch reads SHSHSSSHHHHHNHQSHSHPHRANRSTRKR. 3 stretches are compositionally biased toward low complexity: residues 714 to 726, 733 to 742, and 881 to 901; these read TITTTKTTSGGEQ, DSSTASSLSD, and SSNSGNSSSSNSSSSSSAARS. Ser908 carries the phosphoserine modification. Low complexity-rich tracts occupy residues 921–975 and 988–1020; these read QQQQ…SPVS and TTTTLSTSIGTAATTPTGATTTGVTTTTTMSPP. The FYVE-type zinc finger occupies 1025–1085; the sequence is DGKAPRCMSC…VCRECFMREV (61 aa). The Zn(2+) site is built by Cys1031, Cys1034, Cys1047, Cys1050, Cys1055, Cys1058, Cys1077, and Cys1080. The interval 1088–1115 is disordered; sequence SHSHGQSQSQIHSPTQQAGGRPQAASAS. Residues 1090-1100 are compositionally biased toward low complexity; that stretch reads SHGQSQSQIHS.

The protein belongs to the lst-2 family.

Its function is as follows. Negative regulator of epidermal growth factor receptor (EGFR) signaling. This is Lateral signaling target protein 2 homolog from Drosophila grimshawi (Hawaiian fruit fly).